Consider the following 728-residue polypeptide: Phosphoribosylformylglycinamidine synthase subunit PurL (728 aa).

His42 is a catalytic residue. Residues Tyr45 and Lys84 each coordinate ATP. Glu86 contributes to the Mg(2+) binding site. Residues Ser87–His90 and Arg109 contribute to the substrate site. His88 functions as the Proton acceptor in the catalytic mechanism. Asp110 is a binding site for Mg(2+). Gln237 contacts substrate. Asp265 serves as a coordination point for Mg(2+). Substrate is bound at residue Glu309–Gln311. 2 residues coordinate ATP: Asp491 and Gly528. Position 529 (Asn529) interacts with Mg(2+). Ser531 lines the substrate pocket.

This sequence belongs to the FGAMS family. As to quaternary structure, monomer. Part of the FGAM synthase complex composed of 1 PurL, 1 PurQ and 2 PurS subunits.

The protein localises to the cytoplasm. It catalyses the reaction N(2)-formyl-N(1)-(5-phospho-beta-D-ribosyl)glycinamide + L-glutamine + ATP + H2O = 2-formamido-N(1)-(5-O-phospho-beta-D-ribosyl)acetamidine + L-glutamate + ADP + phosphate + H(+). The protein operates within purine metabolism; IMP biosynthesis via de novo pathway; 5-amino-1-(5-phospho-D-ribosyl)imidazole from N(2)-formyl-N(1)-(5-phospho-D-ribosyl)glycinamide: step 1/2. In terms of biological role, part of the phosphoribosylformylglycinamidine synthase complex involved in the purines biosynthetic pathway. Catalyzes the ATP-dependent conversion of formylglycinamide ribonucleotide (FGAR) and glutamine to yield formylglycinamidine ribonucleotide (FGAM) and glutamate. The FGAM synthase complex is composed of three subunits. PurQ produces an ammonia molecule by converting glutamine to glutamate. PurL transfers the ammonia molecule to FGAR to form FGAM in an ATP-dependent manner. PurS interacts with PurQ and PurL and is thought to assist in the transfer of the ammonia molecule from PurQ to PurL. The sequence is that of Phosphoribosylformylglycinamidine synthase subunit PurL from Campylobacter jejuni subsp. jejuni serotype O:23/36 (strain 81-176).